The primary structure comprises 102 residues: 10 kDa heat shock protein, mitochondrial (102 aa).

The residue at position 2 (Ala-2) is an N-acetylalanine. At Lys-8 the chain carries N6-acetyllysine. Position 28 is an N6-succinyllysine (Lys-28). Residue Lys-40 is modified to N6-acetyllysine; alternate. N6-malonyllysine; alternate occurs at positions 40, 54, and 56. N6-succinyllysine; alternate occurs at positions 40, 54, and 56. The residue at position 56 (Lys-56) is an N6-acetyllysine; alternate. The residue at position 57 (Ser-57) is a Phosphoserine. Lys-66 and Lys-70 each carry N6-acetyllysine; alternate. 2 positions are modified to N6-succinyllysine; alternate: Lys-66 and Lys-70. Thr-79 bears the Phosphothreonine mark. Lys-80 and Lys-86 each carry N6-acetyllysine; alternate. An N6-succinyllysine; alternate mark is found at Lys-80 and Lys-86. At Lys-99 the chain carries N6-acetyllysine.

Belongs to the GroES chaperonin family. Homoheptamer arranged in a ring structure. 2 heptameric Hsp10 rings interact with a Hsp60 tetradecamer in the structure of a back-to-back double heptameric ring to form the symmetrical football complex.

Its subcellular location is the mitochondrion matrix. In terms of biological role, co-chaperonin implicated in mitochondrial protein import and macromolecular assembly. Together with Hsp60, facilitates the correct folding of imported proteins. May also prevent misfolding and promote the refolding and proper assembly of unfolded polypeptides generated under stress conditions in the mitochondrial matrix. The functional units of these chaperonins consist of heptameric rings of the large subunit Hsp60, which function as a back-to-back double ring. In a cyclic reaction, Hsp60 ring complexes bind one unfolded substrate protein per ring, followed by the binding of ATP and association with 2 heptameric rings of the co-chaperonin Hsp10. This leads to sequestration of the substrate protein in the inner cavity of Hsp60 where, for a certain period of time, it can fold undisturbed by other cell components. Synchronous hydrolysis of ATP in all Hsp60 subunits results in the dissociation of the chaperonin rings and the release of ADP and the folded substrate protein. This chain is 10 kDa heat shock protein, mitochondrial (Hspe1), found in Mus musculus (Mouse).